The chain runs to 576 residues: DNA mismatch repair protein MutL (576 aa).

It belongs to the DNA mismatch repair MutL/HexB family.

This protein is involved in the repair of mismatches in DNA. It is required for dam-dependent methyl-directed DNA mismatch repair. May act as a 'molecular matchmaker', a protein that promotes the formation of a stable complex between two or more DNA-binding proteins in an ATP-dependent manner without itself being part of a final effector complex. The protein is DNA mismatch repair protein MutL of Chlamydia trachomatis serovar A (strain ATCC VR-571B / DSM 19440 / HAR-13).